The chain runs to 409 residues: Methylthioribose-1-phosphate isomerase (409 aa).

Catalysis depends on D277, which acts as the Proton donor.

It belongs to the eIF-2B alpha/beta/delta subunits family. MtnA subfamily.

The protein resides in the cytoplasm. The protein localises to the nucleus. It carries out the reaction 5-(methylsulfanyl)-alpha-D-ribose 1-phosphate = 5-(methylsulfanyl)-D-ribulose 1-phosphate. The protein operates within amino-acid biosynthesis; L-methionine biosynthesis via salvage pathway; L-methionine from S-methyl-5-thio-alpha-D-ribose 1-phosphate: step 1/6. Functionally, catalyzes the interconversion of methylthioribose-1-phosphate (MTR-1-P) into methylthioribulose-1-phosphate (MTRu-1-P). The chain is Methylthioribose-1-phosphate isomerase from Scheffersomyces stipitis (strain ATCC 58785 / CBS 6054 / NBRC 10063 / NRRL Y-11545) (Yeast).